We begin with the raw amino-acid sequence, 46 residues long: Bacteriocin acidocin 8912 (46 aa).

Residues 1–20 constitute a propeptide that is removed on maturation; the sequence is MISSHQKTLTDKELALISGG.

It is found in the secreted. Functionally, has a bactericidal effect on sensitive cells but not a bacteriolytic effect. This Lactobacillus acidophilus protein is Bacteriocin acidocin 8912 (acdT).